A 388-amino-acid polypeptide reads, in one-letter code: Chalcone synthase D (388 aa).

The active site involves Cys164.

The protein belongs to the thiolase-like superfamily. Chalcone/stilbene synthases family.

It catalyses the reaction (E)-4-coumaroyl-CoA + 3 malonyl-CoA + 3 H(+) = 2',4,4',6'-tetrahydroxychalcone + 3 CO2 + 4 CoA. It functions in the pathway secondary metabolite biosynthesis; flavonoid biosynthesis. In terms of biological role, the primary product of this enzyme is 4,2',4',6'-tetrahydroxychalcone (also termed naringenin-chalcone or chalcone) which can under specific conditions spontaneously isomerize into naringenin. The chain is Chalcone synthase D (CHSD) from Ipomoea nil (Japanese morning glory).